Reading from the N-terminus, the 130-residue chain is MVPKPHAKSAKKALRKKKVHLKFNVECKNPVEDGILRIEDLEAFLNEKIKVNGKTGHLAANNVKVEVAKSKVSVVSEVPFSKRYLKYLTKKYLKRNSLRDWLRVVAVNKNTYEVRYFHINDGEDAGSDHE.

This sequence belongs to the eukaryotic ribosomal protein eL22 family.

This is Large ribosomal subunit protein eL22 (rpl-22) from Caenorhabditis elegans.